A 698-amino-acid chain; its full sequence is Methionine synthase reductase (698 aa).

In terms of domain architecture, Flavodoxin-like spans 5-147 (LLLYATQQGQ…VVEPWIAGLW (143 aa)). Residue 93–124 (LLGLGDSEYTYFCNGGKIIDKRLQELGARHFY) participates in FMN binding. A hinge region spans residues 166–247 (ALPVASPASS…ASLNIPGLPP (82 aa)). Phosphoserine occurs at positions 171 and 189. One can recognise an FAD-binding FR-type domain in the interval 271–533 (DPVFQVPISK…PRTTNSFHLP (263 aa)). Lysine 291 is an NADP(+) binding site. Residues 451–454 (RPYS) and 487–490 (GVCT) each bind FAD. Residues 610-611 (SR), 624-626 (YVQ), and aspartate 659 contribute to the NADP(+) site. Residue tryptophan 697 participates in FAD binding.

As to quaternary structure, forms a multiprotein complex with MMACHC, MMADHC and MTR. FAD serves as cofactor. The cofactor is FMN. Found in all tissues tested, particularly abundant in skeletal muscle.

The protein localises to the cytoplasm. It catalyses the reaction 2 methylcob(III)alamin-[methionine synthase] + 2 S-adenosyl-L-homocysteine + NADP(+) + H(+) = 2 cob(II)alamin-[methionine synthase] + 2 S-adenosyl-L-methionine + NADPH. The enzyme catalyses 2 cob(II)alamin + A + 2 H2O + 2 H(+) = 2 aquacob(III)alamin + AH2. Key enzyme in methionine and folate homeostasis responsible for the reactivation of methionine synthase (MTR/MS) activity by catalyzing the reductive methylation of MTR-bound cob(II)alamin. Cobalamin (vitamin B12) forms a complex with MTR to serve as an intermediary in methyl transfer reactions that cycles between MTR-bound methylcob(III)alamin and MTR bound-cob(I)alamin forms, and occasional oxidative escape of the cob(I)alamin intermediate during the catalytic cycle leads to the inactive cob(II)alamin species. The processing of cobalamin in the cytosol occurs in a multiprotein complex composed of at least MMACHC, MMADHC, MTRR and MTR which may contribute to shuttle safely and efficiently cobalamin towards MTR in order to produce methionine. Also necessary for the utilization of methyl groups from the folate cycle, thereby affecting transgenerational epigenetic inheritance. Also acts as a molecular chaperone for methionine synthase by stabilizing apoMTR and incorporating methylcob(III)alamin into apoMTR to form the holoenzyme. Also serves as an aquacob(III)alamin reductase by reducing aquacob(III)alamin to cob(II)alamin; this reduction leads to stimulation of the conversion of apoMTR and aquacob(III)alamin to MTR holoenzyme. The sequence is that of Methionine synthase reductase from Homo sapiens (Human).